A 256-amino-acid chain; its full sequence is Thiazole synthase (256 aa).

Lysine 96 functions as the Schiff-base intermediate with DXP in the catalytic mechanism. 1-deoxy-D-xylulose 5-phosphate-binding positions include glycine 157, 184–185 (AG), and 206–207 (NT).

Belongs to the ThiG family. Homotetramer. Forms heterodimers with either ThiH or ThiS.

The protein localises to the cytoplasm. The enzyme catalyses [ThiS sulfur-carrier protein]-C-terminal-Gly-aminoethanethioate + 2-iminoacetate + 1-deoxy-D-xylulose 5-phosphate = [ThiS sulfur-carrier protein]-C-terminal Gly-Gly + 2-[(2R,5Z)-2-carboxy-4-methylthiazol-5(2H)-ylidene]ethyl phosphate + 2 H2O + H(+). The protein operates within cofactor biosynthesis; thiamine diphosphate biosynthesis. Its function is as follows. Catalyzes the rearrangement of 1-deoxy-D-xylulose 5-phosphate (DXP) to produce the thiazole phosphate moiety of thiamine. Sulfur is provided by the thiocarboxylate moiety of the carrier protein ThiS. In vitro, sulfur can be provided by H(2)S. This Brucella canis (strain ATCC 23365 / NCTC 10854 / RM-666) protein is Thiazole synthase.